The primary structure comprises 393 residues: Methylthioribose kinase (393 aa).

ATP is bound by residues Asn38, Lys53, and 107-109 (EDL). Asp225 lines the substrate pocket. 242-244 (DPE) provides a ligand contact to ATP. Position 332 (Arg332) interacts with substrate.

It belongs to the methylthioribose kinase family. In terms of assembly, homodimer.

It carries out the reaction 5-(methylsulfanyl)-D-ribose + ATP = 5-(methylsulfanyl)-alpha-D-ribose 1-phosphate + ADP + H(+). It participates in amino-acid biosynthesis; L-methionine biosynthesis via salvage pathway; S-methyl-5-thio-alpha-D-ribose 1-phosphate from S-methyl-5'-thioadenosine (hydrolase route): step 2/2. In terms of biological role, catalyzes the phosphorylation of methylthioribose into methylthioribose-1-phosphate. In Bacillus thuringiensis subsp. konkukian (strain 97-27), this protein is Methylthioribose kinase.